The following is a 429-amino-acid chain: Enolase (429 aa).

(2R)-2-phosphoglycerate is bound at residue Q163. E205 serves as the catalytic Proton donor. Positions 242, 287, and 314 each coordinate Mg(2+). K339, R368, S369, and K390 together coordinate (2R)-2-phosphoglycerate. The Proton acceptor role is filled by K339.

This sequence belongs to the enolase family. The cofactor is Mg(2+).

It is found in the cytoplasm. Its subcellular location is the secreted. It localises to the cell surface. The catalysed reaction is (2R)-2-phosphoglycerate = phosphoenolpyruvate + H2O. It functions in the pathway carbohydrate degradation; glycolysis; pyruvate from D-glyceraldehyde 3-phosphate: step 4/5. Functionally, catalyzes the reversible conversion of 2-phosphoglycerate (2-PG) into phosphoenolpyruvate (PEP). It is essential for the degradation of carbohydrates via glycolysis. The protein is Enolase of Salinibacter ruber (strain DSM 13855 / M31).